A 271-amino-acid chain; its full sequence is MASENMTPQDYIGHHLNNLQLDLRTFSLVDPQNPPATFWTINIDSMFFSVGLGLLFLVLFRSVAKKATSGVPGKFQTAIELVIGFVNGSVKDMYHGKSKLIAPLALTIFVWVFLMNLMDLLPIDLLPYIAEHVLGLPALRVVPSADVNVTLSMALGVFILILFYSIKMKGIGGFTKELTLQPFNHWAFIPVNLILEGVSLLSKPVSLGLRLFGNMYAGELIFILIAGLLPWWSQWILNVPWAIFHILIITLQAFIFMVLTIVYLSMASEEH.

A run of 5 helical transmembrane segments spans residues 40 to 60 (TINI…LVLF), 100 to 120 (LIAP…LMDL), 146 to 166 (DVNV…FYSI), 220 to 240 (LIFI…LNVP), and 242 to 262 (AIFH…LTIV).

Belongs to the ATPase A chain family. In terms of assembly, F-type ATPases have 2 components, CF(1) - the catalytic core - and CF(0) - the membrane proton channel. CF(1) has five subunits: alpha(3), beta(3), gamma(1), delta(1), epsilon(1). CF(0) has three main subunits: a(1), b(2) and c(9-12). The alpha and beta chains form an alternating ring which encloses part of the gamma chain. CF(1) is attached to CF(0) by a central stalk formed by the gamma and epsilon chains, while a peripheral stalk is formed by the delta and b chains.

Its subcellular location is the cell inner membrane. Key component of the proton channel; it plays a direct role in the translocation of protons across the membrane. This is ATP synthase subunit a from Shigella dysenteriae serotype 1 (strain Sd197).